The chain runs to 418 residues: MTLQDEIKQLAKEARDASRTLAQVSTTVKNDLLKGMADALVAATTALMAENAKDLEAGREKGLSDAMLDRLRLDEARIQGMADGLREVAELPDPVGEVTGMWRRPNGIQVGRMRIPLGVIGIIYESRPNVTADAAGLCLKSGNAVVLRGGSEAIHSNRAIAGVLKGVLAALGLPAGALQLVGTTDRAAVTELLKQEDYIDLIIPRGGEGLIRFVSENSRIPVIKHYKGVCHSFVDADADFDMAEKICVNAKVQRPGVCNAMETLLIHKDAAEVFVPRIARVLGELGVELRGCAETCRLAPGTTPAVDSDWGAEYLDLILAVKVVDGLDAAIAHIQQYSSLHTEVIVTRNYPNSQRFLREINSSVVMVNASSRFSDGNQFGLGAEIGISTTKLHSFGPMGLEDLTTRKFIVFGEGQVRE.

Belongs to the gamma-glutamyl phosphate reductase family.

Its subcellular location is the cytoplasm. It carries out the reaction L-glutamate 5-semialdehyde + phosphate + NADP(+) = L-glutamyl 5-phosphate + NADPH + H(+). It functions in the pathway amino-acid biosynthesis; L-proline biosynthesis; L-glutamate 5-semialdehyde from L-glutamate: step 2/2. Catalyzes the NADPH-dependent reduction of L-glutamate 5-phosphate into L-glutamate 5-semialdehyde and phosphate. The product spontaneously undergoes cyclization to form 1-pyrroline-5-carboxylate. This is Gamma-glutamyl phosphate reductase from Syntrophotalea carbinolica (strain DSM 2380 / NBRC 103641 / GraBd1) (Pelobacter carbinolicus).